We begin with the raw amino-acid sequence, 316 residues long: Conjugated bile acid hydrolase (316 aa).

Residue Cys-2 is the Nucleophile of the active site. Deoxycholate is bound by residues Cys-2 and Arg-18. Residue Asn-81 coordinates taurine.

Belongs to the peptidase C59 family.

The catalysed reaction is cholate + taurine = taurocholate + H2O. It carries out the reaction taurochenodeoxycholate + H2O = chenodeoxycholate + taurine. The enzyme catalyses taurodeoxycholate + H2O = deoxycholate + taurine. It catalyses the reaction glycocholate + H2O = cholate + glycine. The catalysed reaction is glycodeoxycholate + H2O = deoxycholate + glycine. The protein operates within lipid metabolism; bile acid biosynthesis. Its function is as follows. Bile salt hydrolase that catalyzes the deconjugation of glycine- and taurine-linked bile salts, which occurs naturally in the intestines of humans, releasing amino acid residues and deconjugated bile salts (bile acids). Can hydrolyze the amide bond in the bile salts taurocholate (TCA), taurodeoxycholate (TDCA), taurochenodeoxycholate (TCDCA), glycocholate (GCA) and glycodeoxycholate (GDCA). Shows highest activity toward the taurine-conjugated bile salts TCA and TCDCA. The activity toward the other three substrates (TDCA, GCA and GDCA) is relatively low. This enzyme likely contributes to bile salt resistance of the strain and may be associated with survival capability of strain JCM1131 within the human intestine by bile detoxification. The sequence is that of Conjugated bile acid hydrolase from Lactobacillus gasseri (strain ATCC 33323 / DSM 20243 / BCRC 14619 / CIP 102991 / JCM 1131 / KCTC 3163 / NCIMB 11718 / NCTC 13722 / AM63).